Reading from the N-terminus, the 509-residue chain is Heat shock 70 kDa protein 14 (509 aa).

This sequence belongs to the heat shock protein 70 family. In terms of assembly, component of ribosome-associated complex (RAC), a heterodimer composed of Hsp70/DnaK-type chaperone HSPA14 and Hsp40/DnaJ-type chaperone DNAJC2.

It localises to the cytoplasm. It is found in the cytosol. Functionally, component of the ribosome-associated complex (RAC), a complex involved in folding or maintaining nascent polypeptides in a folding-competent state. In the RAC complex, binds to the nascent polypeptide chain, while DNAJC2 stimulates its ATPase activity. The chain is Heat shock 70 kDa protein 14 (HSPA14) from Bos taurus (Bovine).